A 337-amino-acid polypeptide reads, in one-letter code: UPF0252 protein PH1321 (337 aa).

A helical membrane pass occupies residues 100-120 (IIGMLFLVFIILPAITSNLWS).

Belongs to the UPF0252 family.

It is found in the membrane. The polypeptide is UPF0252 protein PH1321 (Pyrococcus horikoshii (strain ATCC 700860 / DSM 12428 / JCM 9974 / NBRC 100139 / OT-3)).